Here is a 246-residue protein sequence, read N- to C-terminus: MFFAVITLFPEMFDAITAYGISGRAAKRDIVQVTCINPRDFAEGNYRRVDERPFGGGPGMVMMAEPLAKAINHAKQLASRAGCVHVPVVYMSPQGKTLNEQAVQQFVDYDGLIVLCGRYEGVDERLIQHYVDQEWSIGDYVLSGGELPAMVLLDSIIRRLPNVMSDEQSAIQDSFVDGLLDCPQYTKPDQFEGLDVPEILKSGHHANIEKWRFLQRYQRTLERRPELIEQVTLTKQQKKWLSDEQG.

S-adenosyl-L-methionine contacts are provided by residues glycine 117 and 137–142 (IGDYVL).

Belongs to the RNA methyltransferase TrmD family. Homodimer.

It localises to the cytoplasm. It carries out the reaction guanosine(37) in tRNA + S-adenosyl-L-methionine = N(1)-methylguanosine(37) in tRNA + S-adenosyl-L-homocysteine + H(+). Functionally, specifically methylates guanosine-37 in various tRNAs. The protein is tRNA (guanine-N(1)-)-methyltransferase of Acinetobacter baumannii (strain AB307-0294).